We begin with the raw amino-acid sequence, 78 residues long: Alpha-amylase inhibitor Haim-1 (78 aa).

2 cysteine pairs are disulfide-bonded: C11-C27 and C45-C72.

Functionally, inhibits mammalian alpha-amylases specifically but has no action on plant and microbial alpha-amylases. In Streptomyces griseosporeus, this protein is Alpha-amylase inhibitor Haim-1.